A 278-amino-acid polypeptide reads, in one-letter code: 4-deoxy-L-threo-5-hexosulose-uronate ketol-isomerase (278 aa).

4 residues coordinate Zn(2+): histidine 196, histidine 198, glutamate 203, and histidine 245.

Belongs to the KduI family. It depends on Zn(2+) as a cofactor.

The enzyme catalyses 5-dehydro-4-deoxy-D-glucuronate = 3-deoxy-D-glycero-2,5-hexodiulosonate. It participates in glycan metabolism; pectin degradation; 2-dehydro-3-deoxy-D-gluconate from pectin: step 4/5. Catalyzes the isomerization of 5-dehydro-4-deoxy-D-glucuronate to 3-deoxy-D-glycero-2,5-hexodiulosonate. This Yersinia pseudotuberculosis serotype O:1b (strain IP 31758) protein is 4-deoxy-L-threo-5-hexosulose-uronate ketol-isomerase.